Here is a 145-residue protein sequence, read N- to C-terminus: 3-hydroxyacyl-[acyl-carrier-protein] dehydratase FabZ (145 aa).

His-50 is a catalytic residue.

It belongs to the thioester dehydratase family. FabZ subfamily.

The protein localises to the cytoplasm. It carries out the reaction a (3R)-hydroxyacyl-[ACP] = a (2E)-enoyl-[ACP] + H2O. Its function is as follows. Involved in unsaturated fatty acids biosynthesis. Catalyzes the dehydration of short chain beta-hydroxyacyl-ACPs and long chain saturated and unsaturated beta-hydroxyacyl-ACPs. This Coxiella burnetii (strain CbuK_Q154) (Coxiella burnetii (strain Q154)) protein is 3-hydroxyacyl-[acyl-carrier-protein] dehydratase FabZ.